The sequence spans 1455 residues: Cleavage and polyadenylation specificity factor subunit 1 (1455 aa).

It belongs to the CPSF1 family. In terms of assembly, component of the cleavage and polyadenylation specificity factor (CPSF) complex, composed of at least Clp, Cpsf73, Cpsf100 and Cpsf160.

It localises to the nucleus. In terms of biological role, component of the cleavage and polyadenylation specificity factor (CPSF) complex that plays a key role in pre-mRNA 3'-end formation, recognizing the AAUAAA signal sequence and interacting with poly(A) polymerase and other factors to bring about cleavage and poly(A) addition. This subunit is involved in the RNA recognition step of the polyadenylation reaction. This is Cleavage and polyadenylation specificity factor subunit 1 (Cpsf160) from Drosophila melanogaster (Fruit fly).